The following is a 449-amino-acid chain: Aspartyl protease AED3 (449 aa).

Positions 1–23 (MASSSLHFFFFLTLLLPFTFTTA) are cleaved as a signal peptide. In terms of domain architecture, Peptidase A1 spans 104–444 (YVVRAKLGTP…DVPNSRIGIA (341 aa)). Asp122 is an active-site residue. Cys132 and Cys138 form a disulfide bridge. Residues Asn140, Asn148, Asn184, Asn211, and Asn297 are each glycosylated (N-linked (GlcNAc...) asparagine). Asp328 is an active-site residue. A glycan (N-linked (GlcNAc...) asparagine) is linked at Asn353. Cys366 and Cys405 are oxidised to a cystine.

Belongs to the peptidase A1 family.

The protein resides in the secreted. It localises to the extracellular space. The protein localises to the apoplast. The protein is Aspartyl protease AED3 of Arabidopsis thaliana (Mouse-ear cress).